Consider the following 538-residue polypeptide: Syncytin-1 (538 aa).

The signal sequence occupies residues 1–20 (MALPYHILLFTVLLPSFTLT). Residues 21-443 (APPPCRCMTS…NTGPWGLLSQ (423 aa)) are Extracellular-facing. An N-linked (GlcNAc...) asparagine glycan is attached at asparagine 169. A CXXC motif is present at residues 186-189 (CWIC). Cystine bridges form between cysteine 186–cysteine 189, cysteine 186–cysteine 405, and cysteine 397–cysteine 404. N-linked (GlcNAc...) asparagine glycosylation is found at asparagine 208, asparagine 214, asparagine 234, and asparagine 281. The tract at residues 320–340 (ILPFVIGAGVLGALGTGIGGI) is fusion peptide. The interval 380–396 (LQNRRALDLLTAERGGT) is immunosuppression. Residues 397 to 405 (CLFLGEECC) carry the CX6CC motif. Residue asparagine 409 is glycosylated (N-linked (GlcNAc...) asparagine). A helical membrane pass occupies residues 444–464 (WMPWILPFLGPLAAIILLLLF). Residues 465–484 (GPCIFNLLVNFVSSRIEAVK) are essential for the fusiogenic function. Over 465–538 (GPCIFNLLVN…LLRPNSAGSS (74 aa)) the chain is Cytoplasmic. The segment at 496–538 (KIYRRPLDRPASPRSDVNDIKCTPPEEISTAQPLLRPNSAGSS) is disordered.

Belongs to the gamma type-C retroviral envelope protein family. HERV class-I W env subfamily. In terms of assembly, the mature envelope protein (Env) consists of a trimer of SU-TM heterodimers attached probably by a labile interchain disulfide bond. Interacts with the C-type lectin CD209/DC-SIGN. Specific enzymatic cleavages in vivo yield mature proteins. Envelope glycoproteins are synthesized as an inactive precursor that is heavily N-glycosylated and processed likely by furin in the Golgi to yield the mature SU and TM proteins. The cleavage site between SU and TM requires the minimal sequence [KR]-X-[KR]-R. In terms of processing, the CXXC motif is highly conserved across a broad range of retroviral envelope proteins. It is thought to participate in the formation of a labile disulfide bond possibly with the CX6CC motif present in the transmembrane protein.

Its subcellular location is the cell membrane. It is found in the virion. Functionally, this endogenous retroviral envelope protein has retained its original fusogenic properties and participates in trophoblast fusion and the formation of a syncytium during placenta morphogenesis. May recognize and induce fusion through binding of SLC1A4 and SLC1A5. Its function is as follows. Endogenous envelope proteins may have kept, lost or modified their original function during evolution. Retroviral envelope proteins mediate receptor recognition and membrane fusion during early infection. The surface protein (SU) mediates receptor recognition, while the transmembrane protein (TM) acts as a class I viral fusion protein. The protein may have at least 3 conformational states: pre-fusion native state, pre-hairpin intermediate state, and post-fusion hairpin state. During viral and target cell membrane fusion, the coiled coil regions (heptad repeats) assume a trimer-of-hairpins structure, positioning the fusion peptide in close proximity to the C-terminal region of the ectodomain. The formation of this structure appears to drive apposition and subsequent fusion of membranes. The sequence is that of Syncytin-1 (ERVW-1) from Gorilla gorilla gorilla (Western lowland gorilla).